Here is a 124-residue protein sequence, read N- to C-terminus: UPF0342 protein DSY2926 (124 aa).

It belongs to the UPF0342 family.

The protein is UPF0342 protein DSY2926 of Desulfitobacterium hafniense (strain Y51).